The following is a 519-amino-acid chain: Pleckstrin homology domain-containing family A member 8 (519 aa).

One can recognise a PH domain in the interval 1–93 (MEGVLYKWTN…WLVALGSAKA (93 aa)). Residue threonine 139 is modified to Phosphothreonine. Position 145 is a phosphoserine (serine 145). Position 153 is a phosphothreonine (threonine 153). A disordered region spans residues 275–302 (GEENLESHDKDPAQPGSDSVCSPESPWE). Residues 330-473 (IPTEAFLASC…EDFVAALTIK (144 aa)) form a glycolipid transfer protein homology domain region.

Homodimer. Interacts with ARF1; the interaction together with phosphatidylinositol 4-phosphate binding is required for FAPP2 GlcCer transfer ability.

It is found in the golgi apparatus. The protein localises to the trans-Golgi network membrane. The protein resides in the membrane. Its function is as follows. Cargo transport protein that is required for apical transport from the trans-Golgi network (TGN). Transports AQP2 from the trans-Golgi network (TGN) to sites of AQP2 phosphorylation. Mediates the non-vesicular transport of glucosylceramide (GlcCer) from the trans-Golgi network (TGN) to the plasma membrane and plays a pivotal role in the synthesis of complex glycosphingolipids. Binding of both phosphatidylinositol 4-phosphate (PIP) and ARF1 are essential for the GlcCer transfer ability. Also required for primary cilium formation, possibly by being involved in the transport of raft lipids to the apical membrane, and for membrane tubulation. The polypeptide is Pleckstrin homology domain-containing family A member 8 (Plekha8) (Mus musculus (Mouse)).